A 103-amino-acid chain; its full sequence is Large ribosomal subunit protein uL24 (103 aa).

The protein belongs to the universal ribosomal protein uL24 family. Part of the 50S ribosomal subunit.

In terms of biological role, one of two assembly initiator proteins, it binds directly to the 5'-end of the 23S rRNA, where it nucleates assembly of the 50S subunit. Its function is as follows. One of the proteins that surrounds the polypeptide exit tunnel on the outside of the subunit. The polypeptide is Large ribosomal subunit protein uL24 (Anoxybacillus flavithermus (strain DSM 21510 / WK1)).